A 155-amino-acid polypeptide reads, in one-letter code: Small ribosomal subunit protein uS7cz/uS7cy (155 aa).

Belongs to the universal ribosomal protein uS7 family. In terms of assembly, part of the 30S ribosomal subunit.

It localises to the plastid. The protein resides in the chloroplast. Its function is as follows. One of the primary rRNA binding proteins, it binds directly to 16S rRNA where it nucleates assembly of the head domain of the 30S subunit. This is Small ribosomal subunit protein uS7cz/uS7cy (rps7-A) from Nandina domestica (Heavenly bamboo).